A 469-amino-acid chain; its full sequence is SHC-transforming protein 1 (469 aa).

The tract at residues 1 to 26 (MNKLSGGGGRRTRVEGGQLGGEEWTR) is disordered. S29 bears the Phosphoserine mark. K44 is subject to N6-acetyllysine. The region spanning 46 to 229 (MGPGVSYLVR…AGFDGSAWDE (184 aa)) is the PID domain. Positions 230 to 373 (EEEELPDHQY…SMAEQLQGES (144 aa)) are CH1. A phosphotyrosine mark is found at Y239, Y240, and Y313. A disordered region spans residues 322–344 (ARQAGGGAGPPNPSVNGSAPRDL). Phosphoserine is present on S339. Positions 374–465 (WFHGKLSRRE…GSELCLQQPV (92 aa)) constitute an SH2 domain.

As to quaternary structure, interacts with CPNE3; this interaction may mediate the binding of CPNE3 with ERBB2. Interacts with the NPXY motif of tyrosine-phosphorylated IGF1R and INSR in vitro via the PID domain. Once activated, binds to GRB2. Interacts with tyrosine-phosphorylated CD3T and DDR2. Interacts with the N-terminal region of APS. Interacts with phosphorylated LRP1 and IRS4. Interacts with INPP5D/SHIP1 and INPPL1/SHIP2. Interacts with ALK, GAB2, GRB7 and KIT. Interacts with PTPN6/SHP (tyrosine phosphorylated). Identified in a complex containing FGFR4, NCAM1, CDH2, PLCG1, FRS2A, SRC, SHC1, GAP43 and CTTN. Interacts with EPHB1 and GRB2; activates the MAPK/ERK cascade to regulate cell migration. Interacts with PDGFRB (tyrosine-phosphorylated). Interacts with ERBB4. Interacts with TEK/TIE2 (tyrosine-phosphorylated). Interacts with PTK2/FAK1. Interacts with FLT4 (tyrosine-phosphorylated). Interacts with the Trk receptors NTRK1, NTRK2 and NTRK3; in a phosphotyrosine-dependent manner. Interacts with CEACAM1; this interaction is CEACAM1-phosphorylation-dependent and mediates interaction with EGFR or INSR resulting in decrease coupling of SHC1 to the MAPK3/ERK1-MAPK1/ERK2 pathway. Interacts (via PID domain) with PEAK1 (when phosphorylated). Found in a complex with PPP1CA, PPP1CC, SHC1 and PEAK1. In terms of processing, phosphorylated by activated epidermal growth factor receptor. Phosphorylated in response to KIT signaling. Tyrosine phosphorylated in response to FLT3 signaling and by ligand-activated ALK. Tyrosine phosphorylated by TEK/TIE2. Tyrosine phosphorylated by ligand-activated PDGFRB. May be tyrosine phosphorylated by activated PTK2/FAK1. Dephosphorylation by PTPN2 may regulate interaction with GRB2. Phosphorylated in response to FLT4 signaling. Tyrosine phosphorylated by activated PTK2B/PYK2.

It is found in the cytoplasm. The protein resides in the cell junction. Its subcellular location is the focal adhesion. Signaling adapter that couples activated growth factor receptors to signaling pathways. Participates in a signaling cascade initiated by activated KIT and KITLG/SCF. Participates in signaling downstream of the angiopoietin receptor TEK/TIE2, and plays a role in the regulation of endothelial cell migration and sprouting angiogenesis. The protein is SHC-transforming protein 1 (Shc1) of Rattus norvegicus (Rat).